We begin with the raw amino-acid sequence, 490 residues long: Ketol-acid reductoisomerase (NADP(+)) (490 aa).

The region spanning Ile15 to Ser208 is the KARI N-terminal Rossmann domain. NADP(+) contacts are provided by residues Cys45–Gln48, Arg68, Ser78, and Asp108–Gln110. The active site involves His132. An NADP(+)-binding site is contributed by Gly158. KARI C-terminal knotted domains follow at residues Ser209–Ile344 and Tyr345–Met484. Mg(2+) contacts are provided by Asp217, Glu221, Glu389, and Glu393. Substrate is bound at residue Ser414.

The protein belongs to the ketol-acid reductoisomerase family. It depends on Mg(2+) as a cofactor.

The catalysed reaction is (2R)-2,3-dihydroxy-3-methylbutanoate + NADP(+) = (2S)-2-acetolactate + NADPH + H(+). The enzyme catalyses (2R,3R)-2,3-dihydroxy-3-methylpentanoate + NADP(+) = (S)-2-ethyl-2-hydroxy-3-oxobutanoate + NADPH + H(+). It participates in amino-acid biosynthesis; L-isoleucine biosynthesis; L-isoleucine from 2-oxobutanoate: step 2/4. It functions in the pathway amino-acid biosynthesis; L-valine biosynthesis; L-valine from pyruvate: step 2/4. Its function is as follows. Involved in the biosynthesis of branched-chain amino acids (BCAA). Catalyzes an alkyl-migration followed by a ketol-acid reduction of (S)-2-acetolactate (S2AL) to yield (R)-2,3-dihydroxy-isovalerate. In the isomerase reaction, S2AL is rearranged via a Mg-dependent methyl migration to produce 3-hydroxy-3-methyl-2-ketobutyrate (HMKB). In the reductase reaction, this 2-ketoacid undergoes a metal-dependent reduction by NADPH to yield (R)-2,3-dihydroxy-isovalerate. The chain is Ketol-acid reductoisomerase (NADP(+)) from Buchnera aphidicola subsp. Melaphis rhois.